Consider the following 1300-residue polypeptide: Serine protease EspP (1300 aa).

Residues 1–55 form the signal peptide; that stretch reads MNKIYSLKYSHITGGLIAVSELSGRVSSRATGKKKHKRILALCFLGLLQSSYSFA. The region spanning 57 to 311 is the Peptidase S6 domain; sequence QMDISNFYIR…NQTTIDNLKN (255 aa). Active-site charge relay system residues include His-127, Asp-156, and Ser-263. The Autotransporter domain occupies 1034-1300; that stretch reads DINGEAGAWA…AVNANFRYSF (267 aa).

Cleaved to release the mature protein from the outer membrane.

It is found in the periplasm. The protein localises to the secreted. It localises to the cell surface. Its subcellular location is the cell outer membrane. Its activity is regulated as follows. Inhibition of cytotoxic activity by phenylmethylsulfonyl fluoride. Its function is as follows. Serine protease capable of cleaving pepsin A and human coagulation factor V, which may contribute to the mucosal hemorrhage observed in hemorrhagic colitis. The polypeptide is Serine protease EspP (espP) (Escherichia coli O157:H7).